Consider the following 902-residue polypeptide: Transcription factor E2F7 (902 aa).

A Phosphoserine modification is found at Ser96. The DNA-binding element occupies 143 to 212; it reads RKQKSLGLLC…VAKNQYGWHG (70 aa). The segment covering 253-269 has biased composition (basic and acidic residues); sequence ERRKDGSPDPRDQHLLD. Residues 253–283 form a disordered region; sequence ERRKDGSPDPRDQHLLDFSESDYPSSSANSR. Residues 283-368 mediate DNA binding; it reads RKDKSLRIMS…GRKPAFKWIG (86 aa). Residue Ser411 is modified to Phosphoserine. Disordered stretches follow at residues 418 to 439, 589 to 627, and 665 to 690; these read SEKIQRKVNSEPSSPQGGKQGP, LCEERNPLEDDEPAVKRQSREFEDSPLSLVMPKKPSNST, and NGFIASECGNPSRNPDTEKSSNDNEI. Basic and acidic residues-rich tracts occupy residues 589–611 and 679–690; these read LCEERNPLEDDEPAVKRQSREFE and PDTEKSSNDNEI. A Phosphoserine modification is found at Ser832. The segment at 844 to 902 is disordered; sequence KAEQSPAPATPKSIQRRHRETFFKTPGSLGDPAFRRERNQSRNTSSAQRRLEISSSGPD. A compositionally biased stretch (polar residues) spans 884–902; the sequence is SRNTSSAQRRLEISSSGPD.

This sequence belongs to the E2F/DP family. Homodimer and heterodimer: mainly forms homodimers and, to a lesser extent, heterodimers with E2F8. Dimerization is important for DNA-binding. Interacts with HIF1A. Interacts with MN1.

The protein resides in the nucleus. In terms of biological role, atypical E2F transcription factor that participates in various processes such as angiogenesis, polyploidization of specialized cells and DNA damage response. Mainly acts as a transcription repressor that binds DNA independently of DP proteins and specifically recognizes the E2 recognition site 5'-TTTC[CG]CGC-3'. Directly represses transcription of classical E2F transcription factors such as E2F1. Acts as a regulator of S-phase by recognizing and binding the E2-related site 5'-TTCCCGCC-3' and mediating repression of G1/S-regulated genes. Plays a key role in polyploidization of cells in placenta and liver by regulating the endocycle, probably by repressing genes promoting cytokinesis and antagonizing action of classical E2F proteins (E2F1, E2F2 and/or E2F3). Required for placental development by promoting polyploidization of trophoblast giant cells. Also involved in DNA damage response: up-regulated by p53/TP53 following genotoxic stress and acts as a downstream effector of p53/TP53-dependent repression by mediating repression of indirect p53/TP53 target genes involved in DNA replication. Acts as a promoter of sprouting angiogenesis, possibly by acting as a transcription activator: associates with HIF1A, recognizes and binds the VEGFA promoter, which is different from canonical E2 recognition site, and activates expression of the VEGFA gene. Acts as a negative regulator of keratinocyte differentiation. In Rattus norvegicus (Rat), this protein is Transcription factor E2F7 (E2f7).